The primary structure comprises 294 residues: MTNFGRVITAMVTPFTPEGEVNYSVAEQLAGHLVEHGSEGLVICGTTGESPTLSWDEEFQLFRTVQQAVAGKAKIIAGTGSNSTHEAIAASQKAAQLGLDGALLVVPYYNKPPQEGLYQHFRAIAQAVPEFPLMLYNIPGRTGQNLLPETIARLAELPNIVAIKEASGNLDQASQIRQLTPTEFAIYSGDDSLTLPLLAVGGVGVVSVASHLVGDQLQQMIRAFTAGQVDVAQTIHTQLLPLFKALFVTTNPIPIKAALQLQGWAVGNLRLPLVSADAATQEMLRSLLQSLNLL.

Thr-47 contacts pyruvate. Catalysis depends on Tyr-136, which acts as the Proton donor/acceptor. Lys-164 acts as the Schiff-base intermediate with substrate in catalysis. Val-206 is a pyruvate binding site.

The protein belongs to the DapA family. Homotetramer; dimer of dimers.

It is found in the cytoplasm. The catalysed reaction is L-aspartate 4-semialdehyde + pyruvate = (2S,4S)-4-hydroxy-2,3,4,5-tetrahydrodipicolinate + H2O + H(+). It participates in amino-acid biosynthesis; L-lysine biosynthesis via DAP pathway; (S)-tetrahydrodipicolinate from L-aspartate: step 3/4. In terms of biological role, catalyzes the condensation of (S)-aspartate-beta-semialdehyde [(S)-ASA] and pyruvate to 4-hydroxy-tetrahydrodipicolinate (HTPA). This is 4-hydroxy-tetrahydrodipicolinate synthase from Cyanothece sp. (strain PCC 7425 / ATCC 29141).